The chain runs to 230 residues: 2,3-bisphosphoglycerate-dependent phosphoglycerate mutase 2 (230 aa).

Substrate-binding positions include 8-15 (RHGQSEWN), 21-22 (TG), Arg-60, 87-90 (ERHY), Lys-98, 114-115 (RR), and 183-184 (GN). The active-site Tele-phosphohistidine intermediate is His-9. Glu-87 acts as the Proton donor/acceptor in catalysis.

This sequence belongs to the phosphoglycerate mutase family. BPG-dependent PGAM subfamily.

The enzyme catalyses (2R)-2-phosphoglycerate = (2R)-3-phosphoglycerate. It functions in the pathway carbohydrate degradation; glycolysis; pyruvate from D-glyceraldehyde 3-phosphate: step 3/5. Functionally, catalyzes the interconversion of 2-phosphoglycerate and 3-phosphoglycerate. The chain is 2,3-bisphosphoglycerate-dependent phosphoglycerate mutase 2 from Lactiplantibacillus plantarum (strain ATCC BAA-793 / NCIMB 8826 / WCFS1) (Lactobacillus plantarum).